Here is a 176-residue protein sequence, read N- to C-terminus: Small ribosomal subunit protein uS5 (176 aa).

Positions 11 to 74 constitute an S5 DRBM domain; the sequence is LSEVLVDVNR…QAAKKRMMKV (64 aa).

This sequence belongs to the universal ribosomal protein uS5 family. Part of the 30S ribosomal subunit. Contacts proteins S4 and S8.

Functionally, with S4 and S12 plays an important role in translational accuracy. Its function is as follows. Located at the back of the 30S subunit body where it stabilizes the conformation of the head with respect to the body. This chain is Small ribosomal subunit protein uS5, found in Rickettsia rickettsii (strain Iowa).